Reading from the N-terminus, the 457-residue chain is D(1B) dopamine receptor (457 aa).

At 1 to 41 (MYQPFQHLDSDQVASWQSPEMLMNKSVSRESQRRKELVAGQ) the chain is on the extracellular side. N24 is a glycosylation site (N-linked (GlcNAc...) asparagine). The helical transmembrane segment at 42–67 (IVTGSLLLLLIFWTLFGNILVCTAVM) threads the bilayer. Topologically, residues 68-78 (RFRHLRSRVTN) are cytoplasmic. Residues 79 to 105 (IFIVSLAVSDLLVALLVMPWKAVAEVA) form a helical membrane-spanning segment. The Extracellular segment spans residues 106–114 (GHWPFGAFC). C114 and C199 form a disulfide bridge. The helical transmembrane segment at 115-137 (DIWVAFDIMCSTASILNLCVISV) threads the bilayer. The Cytoplasmic portion of the chain corresponds to 138 to 156 (DRYWAISSPFRYERKMTQR). A helical transmembrane segment spans residues 157 to 181 (VALLMISTAWALSVLISFIPVQLSW). The Extracellular segment spans residues 182-205 (HKSETEDHLLSNHSTGNCDSSLNR). A helical membrane pass occupies residues 206–231 (TYAISSSLISFYIPVAIMIVTYTRIY). Over 232–282 (RIAQIQIKRISTLERAAEHAQSCRSNRVDSCSRHHQTSLRTSIKKETKVLK) the chain is Cytoplasmic. A helical membrane pass occupies residues 283–309 (TLSIIMGVFVCCWLPFFILNCMVPFCD). The Extracellular segment spans residues 310–326 (RSPGHPQAGLPCVSETT). Residues 327–351 (FDIFVWFGWANSSLNPIIYAFNADF) form a helical membrane-spanning segment. Residues 352 to 457 (RKVFSSLLGC…ITPSMSNGIH (106 aa)) are Cytoplasmic-facing. C361 is lipidated: S-palmitoyl cysteine.

The protein belongs to the G-protein coupled receptor 1 family. As to expression, brain and kidney.

Its subcellular location is the cell membrane. Functionally, dopamine receptor whose activity is mediated by G proteins which activate adenylyl cyclase. This is D(1B) dopamine receptor (drd5) from Xenopus laevis (African clawed frog).